We begin with the raw amino-acid sequence, 580 residues long: 2-hydroxyacyl-CoA lyase 1 (580 aa).

Glu47 lines the thiamine diphosphate pocket. The interval 413-494 is thiamine pyrophosphate binding; it reads TMDIGRLCIP…FIVLNNNGVY (82 aa). The Mg(2+) site is built by Asp463 and Asn490.

It belongs to the TPP enzyme family. As to quaternary structure, homotetramer. Mg(2+) is required as a cofactor. It depends on thiamine diphosphate as a cofactor.

It is found in the peroxisome. It carries out the reaction a 2-hydroxy-3-methyl fatty acyl-CoA = a 2-methyl-branched fatty aldehyde + formyl-CoA. It catalyses the reaction an (R)-2-hydroxy-long-chain-fatty acyl-CoA = a long-chain fatty aldehyde + formyl-CoA. The enzyme catalyses 2-hydroxy-3-methylhexadecanoyl-CoA = 2-methylpentadecanal + formyl-CoA. The catalysed reaction is 2-hydroxyoctadecanoyl-CoA = heptadecanal + formyl-CoA. Functionally, peroxisomal 2-OH acyl-CoA lyase involved in the cleavage (C1 removal) reaction in the fatty acid alpha-oxydation in a thiamine pyrophosphate (TPP)-dependent manner. Involved in the degradation of 3-methyl-branched fatty acids and the shortening of 2-hydroxy long-chain fatty acids. This Dictyostelium discoideum (Social amoeba) protein is 2-hydroxyacyl-CoA lyase 1 (hacl1).